We begin with the raw amino-acid sequence, 201 residues long: GTP cyclohydrolase 1 (201 aa).

Zn(2+)-binding residues include Cys-90, His-93, and Cys-163.

Belongs to the GTP cyclohydrolase I family. As to quaternary structure, homomer.

It carries out the reaction GTP + H2O = 7,8-dihydroneopterin 3'-triphosphate + formate + H(+). Its pathway is cofactor biosynthesis; 7,8-dihydroneopterin triphosphate biosynthesis; 7,8-dihydroneopterin triphosphate from GTP: step 1/1. The sequence is that of GTP cyclohydrolase 1 from Streptomyces griseus subsp. griseus (strain JCM 4626 / CBS 651.72 / NBRC 13350 / KCC S-0626 / ISP 5235).